The primary structure comprises 62 residues: Sperm protamine P1 (62 aa).

The tract at residues 1-62 (MARYRHSRSR…RYSRRRRRRY (62 aa)) is disordered.

The protein belongs to the protamine P1 family. In terms of tissue distribution, testis.

Its subcellular location is the nucleus. The protein localises to the chromosome. Functionally, protamines substitute for histones in the chromatin of sperm during the haploid phase of spermatogenesis. They compact sperm DNA into a highly condensed, stable and inactive complex. The sequence is that of Sperm protamine P1 (PRM1) from Notamacropus eugenii (Tammar wallaby).